The following is a 142-amino-acid chain: Serine/threonine-protein kinase BtrW (142 aa).

The protein belongs to the anti-sigma-factor family. In terms of assembly, probably able to multimerize; interacts with BtrV.

The catalysed reaction is L-seryl-[protein] + ATP = O-phospho-L-seryl-[protein] + ADP + H(+). The enzyme catalyses L-threonyl-[protein] + ATP = O-phospho-L-threonyl-[protein] + ADP + H(+). Functionally, possible negative regulator of sigma-B activity. Phosphorylates and inactivates its specific antagonist protein, BtrV. Upon phosphorylation of BtrV, BtrW is released and binds to an unknown partner(s) that might be sigma-B, thereby blocking its ability to form a complex with its partner (possibly an RNA polymerase holoenzyme (E-sigma-B)). Involved in type III secretion system (T3SS). Phosphorylates BtrV. The protein is Serine/threonine-protein kinase BtrW (btrW) of Bordetella bronchiseptica (strain ATCC BAA-588 / NCTC 13252 / RB50) (Alcaligenes bronchisepticus).